The following is a 299-amino-acid chain: Regucalcin (299 aa).

Residue glutamate 18 coordinates a divalent metal cation. Substrate contacts are provided by arginine 101, asparagine 103, and glutamate 121. The residue at position 144 (lysine 144) is an N6-succinyllysine. 2 residues coordinate a divalent metal cation: asparagine 154 and aspartate 204. Aspartate 204 acts as the Proton donor/acceptor in catalysis. N6-succinyllysine occurs at positions 244 and 253.

This sequence belongs to the SMP-30/CGR1 family. As to quaternary structure, monomer. Zn(2+) is required as a cofactor. Mn(2+) serves as cofactor. Requires Ca(2+) as cofactor. It depends on Mg(2+) as a cofactor.

The protein resides in the cytoplasm. The enzyme catalyses D-glucono-1,5-lactone + H2O = D-gluconate + H(+). In terms of biological role, gluconolactonase with low activity towards other sugar lactones, including gulonolactone and galactonolactone. Can also hydrolyze diisopropyl phosphorofluoridate and phenylacetate (in vitro). Calcium-binding protein. Modulates Ca(2+) signaling, and Ca(2+)-dependent cellular processes and enzyme activities. The polypeptide is Regucalcin (RGN) (Pongo abelii (Sumatran orangutan)).